The following is a 269-amino-acid chain: Capsid assembly scaffolding protein (269 aa).

Belongs to the T4likevirus capsid assembly scaffolding protein family.

The protein resides in the virion. Functionally, scaffolding protein involved in the icosahedric procapsid assembly. Coassembles with the capsid proteins to form the procapsid, in which the scaffolding protein is found within the external shell of icosahedrally arranged capsid protein subunits. In a subsequent step the scaffolding protein molecules are cleaved by the viral protease and released, except for the internal peptide VII. Cleavage product of Gp22 that is incorporated into the mature phage head. The polypeptide is Capsid assembly scaffolding protein (22) (Enterobacteria phage T4 (Bacteriophage T4)).